The sequence spans 28 residues: Gamma-conotoxin-like de7a (28 aa).

3 disulfide bridges follow: cysteine 2–cysteine 18, cysteine 9–cysteine 22, and cysteine 17–cysteine 27. Proline 4 carries the post-translational modification 4-hydroxyproline. 4-carboxyglutamate is present on residues glutamate 13 and glutamate 16. Residue serine 28 is modified to Serine amide.

This sequence belongs to the conotoxin O1 superfamily. As to expression, expressed by the venom duct.

The protein resides in the secreted. Its function is as follows. Gamma-conotoxins may act on voltage-gated non-specific cation pacemaker channels (HCN). The polypeptide is Gamma-conotoxin-like de7a (Conasprella delessertii (Sozon's cone)).